Reading from the N-terminus, the 144-residue chain is Cytochrome c oxidase subunit 4 isoform 1, mitochondrial (144 aa).

At 1 to 73 (SVVKSEDFSL…SFAEMNRGSN (73 aa)) the chain is on the mitochondrial matrix side. Lys-4 carries the N6-acetyllysine; alternate modification. An N6-succinyllysine; alternate modification is found at Lys-4. Lys-28 carries the N6-acetyllysine modification. Phosphoserine is present on residues Ser-31 and Ser-33. Lys-35 is subject to N6-acetyllysine; alternate. Lys-35 carries the N6-succinyllysine; alternate modification. An N6-acetyllysine modification is found at Lys-42. Residues 74–99 (EWKTVVGGAMFFIGFTALIIMWQKHY) form a helical membrane-spanning segment. At 100–144 (VYGPLPQTFDKEWVGKQTKRMLDMKVNPIQGLASKWDYEKNEWKK) the chain is on the mitochondrial intermembrane side.

This sequence belongs to the cytochrome c oxidase IV family. In terms of assembly, component of the cytochrome c oxidase (complex IV, CIV), a multisubunit enzyme composed of 14 subunits. The complex is composed of a catalytic core of 3 subunits MT-CO1, MT-CO2 and MT-CO3, encoded in the mitochondrial DNA, and 11 supernumerary subunits COX4I, COX5A, COX5B, COX6A, COX6B, COX6C, COX7A, COX7B, COX7C, COX8 and NDUFA4, which are encoded in the nuclear genome. The complex exists as a monomer or a dimer and forms supercomplexes (SCs) in the inner mitochondrial membrane with NADH-ubiquinone oxidoreductase (complex I, CI) and ubiquinol-cytochrome c oxidoreductase (cytochrome b-c1 complex, complex III, CIII), resulting in different assemblies (supercomplex SCI(1)III(2)IV(1) and megacomplex MCI(2)III(2)IV(2)). Interacts with PHB2; the interaction decreases in absence of SPHK2. Interacts with AFG1L. Interacts with ABCB7; this interaction allows the regulation of cellular iron homeostasis and cellular reactive oxygen species (ROS) levels in cardiomyocytes. Interacts with FLVCR2; this interaction occurs in the absence of heme and is disrupted upon heme binding. Interacts with IRGC.

The protein resides in the mitochondrion inner membrane. It participates in energy metabolism; oxidative phosphorylation. In terms of biological role, component of the cytochrome c oxidase, the last enzyme in the mitochondrial electron transport chain which drives oxidative phosphorylation. The respiratory chain contains 3 multisubunit complexes succinate dehydrogenase (complex II, CII), ubiquinol-cytochrome c oxidoreductase (cytochrome b-c1 complex, complex III, CIII) and cytochrome c oxidase (complex IV, CIV), that cooperate to transfer electrons derived from NADH and succinate to molecular oxygen, creating an electrochemical gradient over the inner membrane that drives transmembrane transport and the ATP synthase. Cytochrome c oxidase is the component of the respiratory chain that catalyzes the reduction of oxygen to water. Electrons originating from reduced cytochrome c in the intermembrane space (IMS) are transferred via the dinuclear copper A center (CU(A)) of subunit 2 and heme A of subunit 1 to the active site in subunit 1, a binuclear center (BNC) formed by heme A3 and copper B (CU(B)). The BNC reduces molecular oxygen to 2 water molecules using 4 electrons from cytochrome c in the IMS and 4 protons from the mitochondrial matrix. The protein is Cytochrome c oxidase subunit 4 isoform 1, mitochondrial (COX4I1) of Hylobates agilis (Agile gibbon).